A 218-amino-acid polypeptide reads, in one-letter code: Octanoyltransferase (218 aa).

Positions 31–206 (REAADEVWLV…QLVKHLDYAE (176 aa)) constitute a BPL/LPL catalytic domain. Substrate-binding positions include 70 to 77 (RGGQVTYH), 137 to 139 (SLG), and 150 to 152 (GLA). The Acyl-thioester intermediate role is filled by Cys-168.

This sequence belongs to the LipB family.

It is found in the cytoplasm. It carries out the reaction octanoyl-[ACP] + L-lysyl-[protein] = N(6)-octanoyl-L-lysyl-[protein] + holo-[ACP] + H(+). It functions in the pathway protein modification; protein lipoylation via endogenous pathway; protein N(6)-(lipoyl)lysine from octanoyl-[acyl-carrier-protein]: step 1/2. Catalyzes the transfer of endogenously produced octanoic acid from octanoyl-acyl-carrier-protein onto the lipoyl domains of lipoate-dependent enzymes. Lipoyl-ACP can also act as a substrate although octanoyl-ACP is likely to be the physiological substrate. The polypeptide is Octanoyltransferase (Pseudomonas savastanoi pv. phaseolicola (strain 1448A / Race 6) (Pseudomonas syringae pv. phaseolicola (strain 1448A / Race 6))).